A 566-amino-acid chain; its full sequence is Membrane protein insertase YidC (566 aa).

A run of 5 helical transmembrane segments spans residues isoleucine 3–tryptophan 23, glycine 346–valine 366, tryptophan 369–alanine 389, glycine 436–isoleucine 456, and methionine 509–leucine 529.

It belongs to the OXA1/ALB3/YidC family. Type 1 subfamily. As to quaternary structure, interacts with the Sec translocase complex via SecD. Specifically interacts with transmembrane segments of nascent integral membrane proteins during membrane integration.

Its subcellular location is the cell inner membrane. Required for the insertion and/or proper folding and/or complex formation of integral membrane proteins into the membrane. Involved in integration of membrane proteins that insert both dependently and independently of the Sec translocase complex, as well as at least some lipoproteins. Aids folding of multispanning membrane proteins. The protein is Membrane protein insertase YidC of Coxiella burnetii (strain CbuK_Q154) (Coxiella burnetii (strain Q154)).